A 74-amino-acid chain; its full sequence is Amphipathic peptide CT1 (74 aa).

Residues 1–23 form the signal peptide; that stretch reads MKTQIVILFISMIMLQMFVQIEG. A Valine amide modification is found at Val37. A propeptide spanning residues 41–74 is cleaved from the precursor; that stretch reads GLRNLDDLDDLDLDHLFDSDVSDADLRLLKQMFR.

It belongs to the non-disulfide-bridged peptide (NDBP) superfamily. Short antimicrobial peptide (group 4) family. Expressed by the venom gland.

It localises to the secreted. It is found in the target cell membrane. Antimicrobial peptide that is rapidly bactericidal against Gram-positive bacteria (MIC=12.5 ug/ml against S.aureus, and MIC=100 ug/ml against M.luteus). Is also active against clinical antibiotics-resistant bacterial strains. This Scorpiops tibetanus (Scorpion) protein is Amphipathic peptide CT1.